A 324-amino-acid polypeptide reads, in one-letter code: tRNA dimethylallyltransferase (324 aa).

17 to 24 (GPTASGKT) is an ATP binding site. 19–24 (TASGKT) contacts substrate. Interaction with substrate tRNA stretches follow at residues 42–45 (DSAL), 166–170 (QRIQR), and 251–256 (RCVGYR).

The protein belongs to the IPP transferase family. As to quaternary structure, monomer. The cofactor is Mg(2+).

The catalysed reaction is adenosine(37) in tRNA + dimethylallyl diphosphate = N(6)-dimethylallyladenosine(37) in tRNA + diphosphate. In terms of biological role, catalyzes the transfer of a dimethylallyl group onto the adenine at position 37 in tRNAs that read codons beginning with uridine, leading to the formation of N6-(dimethylallyl)adenosine (i(6)A). This is tRNA dimethylallyltransferase from Burkholderia pseudomallei (strain 1106a).